Reading from the N-terminus, the 509-residue chain is Midnolin (509 aa).

A compositionally biased stretch (polar residues) spans 1–12 (MDQHPSARSCSS). Positions 1 to 27 (MDQHPSARSCSSRGAAPSCESVSGEPP) are disordered. The 75-residue stretch at 28-102 (MNLYIHSTTG…LTLVPTVEAG (75 aa)) folds into the Ubiquitin-like domain. 3 disordered regions span residues 172-295 (GSSE…NTPL), 370-404 (QCTSPNSPAPSPPPSPPHTTGLTGLPTTVPSETQP), and 448-485 (KRLRRKARRDSRAPYHWLPNRKAGRSNSNSSMSSEGSL). The span at 176–190 (GTTGLSHGASGSASG) shows a compositional bias: low complexity. The segment covering 196 to 209 (HNPHPHHPHQHPHH) has biased composition (basic residues). Positions 220–231 (AFPPSPSIPSIP) are enriched in pro residues. The span at 261–285 (PSSACAPSPSSPSPAASCPEASCSA) shows a compositional bias: low complexity. Over residues 286 to 295 (KTSGNCNTPL) the composition is skewed to polar residues. Pro residues predominate over residues 376–386 (SPAPSPPPSPP). The segment covering 387 to 400 (HTTGLTGLPTTVPS) has biased composition (low complexity).

Its subcellular location is the nucleus. It localises to the cytoplasm. It is found in the cytosol. The protein localises to the nucleolus. Functionally, facilitates ubiquitin-independent proteasomal degradation of polycomb protein CBX4. Plays a role in inhibiting the activity of glucokinase GCK and both glucose-induced and basal insulin secretion. This chain is Midnolin (midn), found in Danio rerio (Zebrafish).